A 547-amino-acid polypeptide reads, in one-letter code: Large cysteine-rich periplasmic protein OmcB (547 aa).

Residues methionine 1–alanine 22 form the signal peptide. Residues serine 23–serine 40 constitute a propeptide that is removed on maturation. The segment at lysine 45–lysine 84 is disordered. Positions histidine 52–histidine 61 are enriched in basic residues. Over residues serine 62 to lysine 79 the composition is skewed to basic and acidic residues.

Part of a disulfide cross-linked outer membrane complex (COMC) composed of the major outer membrane porin (MOMP), the small cysteine-rich protein (OmcA) and the large cysteine-rich periplasmic protein (OmcB).

The protein resides in the periplasm. In terms of biological role, in elementary bodies (EBs, the infectious stage, which is able to survive outside the host cell) provides the structural integrity of the outer envelope through disulfide cross-links with the small cysteine-rich protein and the major outer membrane protein. It has been described in publications as the Sarkosyl-insoluble COMC (Chlamydia outer membrane complex), and serves as the functional equivalent of peptidoglycan. The polypeptide is Large cysteine-rich periplasmic protein OmcB (omcB) (Chlamydia trachomatis serovar D (strain ATCC VR-885 / DSM 19411 / UW-3/Cx)).